Consider the following 534-residue polypeptide: Glutamyl-tRNA(Gln) amidotransferase subunit B, mitochondrial (534 aa).

Residues 1–28 (MTVLCRLRHCHLSTPTLCRRFHDARVYK) constitute a mitochondrion transit peptide.

The protein belongs to the GatB/GatE family. GatB subfamily. As to quaternary structure, subunit of the heterotrimeric GatCAB amidotransferase (AdT) complex, composed of A, B and C subunits.

It is found in the mitochondrion. The enzyme catalyses L-glutamyl-tRNA(Gln) + L-glutamine + ATP + H2O = L-glutaminyl-tRNA(Gln) + L-glutamate + ADP + phosphate + H(+). In terms of biological role, allows the formation of correctly charged Gln-tRNA(Gln) through the transamidation of misacylated Glu-tRNA(Gln) in the mitochondria. The reaction takes place in the presence of glutamine and ATP through an activated gamma-phospho-Glu-tRNA(Gln). This Laccaria bicolor (strain S238N-H82 / ATCC MYA-4686) (Bicoloured deceiver) protein is Glutamyl-tRNA(Gln) amidotransferase subunit B, mitochondrial.